The primary structure comprises 173 residues: Transmembrane protein 240 (173 aa).

A run of 2 helical transmembrane segments spans residues 5–25 and 90–110; these read ANTM…ACLM and LMLG…MDGV. The residue at position 169 (S169) is a Phosphoserine.

The protein resides in the synapse. It is found in the cell membrane. The chain is Transmembrane protein 240 (Tmem240) from Mus musculus (Mouse).